The primary structure comprises 101 residues: MYISRNLEQWNAFLQMLKIAFEENKAQEFLTLLLTADERDAVGLRLQIVSQLIDKNMPQREIQQNLNTSAATITRGSNMIKTMDPDFMQWMKQHLDLIEKN.

A DNA-binding region spans residues 59–82; the sequence is QREIQQNLNTSAATITRGSNMIKT.

It belongs to the TrpR family. Homodimer.

The protein localises to the cytoplasm. This protein is an aporepressor. When complexed with L-tryptophan it binds the operator region of the trp operon and prevents the initiation of transcription. The protein is Trp operon repressor homolog of Haemophilus influenzae (strain 86-028NP).